We begin with the raw amino-acid sequence, 119 residues long: uncharacterized protein (119 aa).

It localises to the mitochondrion. This is an uncharacterized protein from Arabidopsis thaliana (Mouse-ear cress).